A 227-amino-acid chain; its full sequence is ATP-dependent dethiobiotin synthetase BioD (227 aa).

13-18 (NIGKTI) provides a ligand contact to ATP. Residue threonine 17 participates in Mg(2+) binding. The active site involves lysine 38. Position 42 (serine 42) interacts with substrate. ATP contacts are provided by residues aspartate 55, 117 to 120 (EGFG), 177 to 178 (NH), 206 to 208 (PFI), and asparagine 213. Residues aspartate 55 and glutamate 117 each contribute to the Mg(2+) site.

The protein belongs to the dethiobiotin synthetase family. In terms of assembly, homodimer. Mg(2+) is required as a cofactor.

It is found in the cytoplasm. It carries out the reaction (7R,8S)-7,8-diammoniononanoate + CO2 + ATP = (4R,5S)-dethiobiotin + ADP + phosphate + 3 H(+). The protein operates within cofactor biosynthesis; biotin biosynthesis; biotin from 7,8-diaminononanoate: step 1/2. Its function is as follows. Catalyzes a mechanistically unusual reaction, the ATP-dependent insertion of CO2 between the N7 and N8 nitrogen atoms of 7,8-diaminopelargonic acid (DAPA, also called 7,8-diammoniononanoate) to form a ureido ring. In Wigglesworthia glossinidia brevipalpis, this protein is ATP-dependent dethiobiotin synthetase BioD.